Here is a 101-residue protein sequence, read N- to C-terminus: Small ribosomal subunit protein uS14 (101 aa).

Belongs to the universal ribosomal protein uS14 family. Part of the 30S ribosomal subunit. Contacts proteins S3 and S10.

Functionally, binds 16S rRNA, required for the assembly of 30S particles and may also be responsible for determining the conformation of the 16S rRNA at the A site. In Haemophilus influenzae (strain PittGG), this protein is Small ribosomal subunit protein uS14.